The sequence spans 158 residues: uncharacterized protein (158 aa).

Residues 33–53 form a helical membrane-spanning segment; it reads VLAAVPQLGAAKVLVLLLLGV.

Its subcellular location is the membrane. This is an uncharacterized protein from Saccharomyces cerevisiae (strain ATCC 204508 / S288c) (Baker's yeast).